Here is a 629-residue protein sequence, read N- to C-terminus: 1-deoxy-D-xylulose-5-phosphate synthase (629 aa).

Thiamine diphosphate-binding positions include His-72 and 113–115 (GHA). Position 144 (Asp-144) interacts with Mg(2+). Thiamine diphosphate-binding positions include 145–146 (GA), Asn-174, Tyr-287, and Glu-370. Mg(2+) is bound at residue Asn-174.

The protein belongs to the transketolase family. DXPS subfamily. Homodimer. Mg(2+) is required as a cofactor. Requires thiamine diphosphate as cofactor.

It catalyses the reaction D-glyceraldehyde 3-phosphate + pyruvate + H(+) = 1-deoxy-D-xylulose 5-phosphate + CO2. It participates in metabolic intermediate biosynthesis; 1-deoxy-D-xylulose 5-phosphate biosynthesis; 1-deoxy-D-xylulose 5-phosphate from D-glyceraldehyde 3-phosphate and pyruvate: step 1/1. Catalyzes the acyloin condensation reaction between C atoms 2 and 3 of pyruvate and glyceraldehyde 3-phosphate to yield 1-deoxy-D-xylulose-5-phosphate (DXP). This chain is 1-deoxy-D-xylulose-5-phosphate synthase, found in Prochlorococcus marinus (strain MIT 9301).